The chain runs to 346 residues: UDP-N-acetylenolpyruvoylglucosamine reductase (346 aa).

Residues 18–189 (LRAQARAFIA…VSVVFALKTH (172 aa)) enclose the FAD-binding PCMH-type domain. Residue arginine 165 is part of the active site. Serine 240 functions as the Proton donor in the catalytic mechanism. Glutamate 336 is a catalytic residue.

The protein belongs to the MurB family. The cofactor is FAD.

The protein localises to the cytoplasm. It carries out the reaction UDP-N-acetyl-alpha-D-muramate + NADP(+) = UDP-N-acetyl-3-O-(1-carboxyvinyl)-alpha-D-glucosamine + NADPH + H(+). Its pathway is cell wall biogenesis; peptidoglycan biosynthesis. Functionally, cell wall formation. This Neisseria meningitidis serogroup B (strain ATCC BAA-335 / MC58) protein is UDP-N-acetylenolpyruvoylglucosamine reductase.